The following is a 336-amino-acid chain: Tryptophan--tRNA ligase (336 aa).

ATP contacts are provided by residues 9–11 (QPS) and 17–18 (GN). The 'HIGH' region signature appears at 10–18 (PSGTPTIGN). D134 provides a ligand contact to L-tryptophan. Residues 146–148 (GDD), I189, and 198–202 (KMSKS) each bind ATP. The 'KMSKS' region signature appears at 198-202 (KMSKS).

Belongs to the class-I aminoacyl-tRNA synthetase family. Homodimer.

The protein localises to the cytoplasm. It catalyses the reaction tRNA(Trp) + L-tryptophan + ATP = L-tryptophyl-tRNA(Trp) + AMP + diphosphate + H(+). Its function is as follows. Catalyzes the attachment of tryptophan to tRNA(Trp). The chain is Tryptophan--tRNA ligase from Enterococcus faecalis (strain ATCC 700802 / V583).